The following is a 95-amino-acid chain: MSVSKKDVEYVAELARLEFKEEEKDNFVNDLNKILNYMEKLDELNTDDVDIVVNPYYIENKYREDNVEKSMELKEVIDNAPENLEEYVIVPKVID.

Belongs to the GatC family. Heterotrimer of A, B and C subunits.

It carries out the reaction L-glutamyl-tRNA(Gln) + L-glutamine + ATP + H2O = L-glutaminyl-tRNA(Gln) + L-glutamate + ADP + phosphate + H(+). It catalyses the reaction L-aspartyl-tRNA(Asn) + L-glutamine + ATP + H2O = L-asparaginyl-tRNA(Asn) + L-glutamate + ADP + phosphate + 2 H(+). In terms of biological role, allows the formation of correctly charged Asn-tRNA(Asn) or Gln-tRNA(Gln) through the transamidation of misacylated Asp-tRNA(Asn) or Glu-tRNA(Gln) in organisms which lack either or both of asparaginyl-tRNA or glutaminyl-tRNA synthetases. The reaction takes place in the presence of glutamine and ATP through an activated phospho-Asp-tRNA(Asn) or phospho-Glu-tRNA(Gln). The sequence is that of Aspartyl/glutamyl-tRNA(Asn/Gln) amidotransferase subunit C from Clostridium botulinum (strain Loch Maree / Type A3).